Reading from the N-terminus, the 319-residue chain is Ribonucleoside-diphosphate reductase small chain (319 aa).

The Fe cation site is built by Asp70, Glu101, and His104. Residue Tyr108 is part of the active site. Residues Glu163, Glu197, and His200 each coordinate Fe cation. Residues 313 to 319 (FSLDVDF) form an interaction with R1 region.

It belongs to the ribonucleoside diphosphate reductase small chain family. Interacts with RNR1/OPG080 subunit. Can interact with host RNR1 supunit. The cofactor is Fe cation.

It carries out the reaction a 2'-deoxyribonucleoside 5'-diphosphate + [thioredoxin]-disulfide + H2O = a ribonucleoside 5'-diphosphate + [thioredoxin]-dithiol. In terms of biological role, ribonucleoside-diphosphate reductase holoenzyme provides the precursors necessary for viral DNA synthesis. Allows virus growth in non-dividing cells. Catalyzes the biosynthesis of deoxyribonucleotides from the corresponding ribonucleotides. The protein is Ribonucleoside-diphosphate reductase small chain (OPG048) of Vaccinia virus (strain Ankara) (VACV).